The chain runs to 370 residues: MLISIAFLLVLYLLNYSSFRMLKSFLTLKKISQYAYLWFFILLSIGEAAFVFYRNIMPSHLFVLTSACSFVSFIIFILSLSFYGFSYSIEKIDFLHSRRKSLKNFLKLGFYLALLGYFWRGFYEGLARPKIKETPIYLDKLDKELKIILLTDMHVGSLLQKDFVDYIVEEVNQKEVDMVLIGGDLVDESIEKVKSFLLPLNNLKSTHGTFYVPGNHEYYHGIEPILSFLDTLNLTILGNECVHLGGINLCGVYDYFARKRQNFAPDIDKALKKRNESKPTILLAHQPKQIRSLKESHSVDLVLSGHTHAGQIFPFSLLVKLAQTYLHGLYKHSPTTQIYVSSGAGYWGIPLRFLAPSEIAYLRLLPKNQA.

Positions 152, 154, 184, 215, 306, and 308 each coordinate a divalent metal cation.

The protein belongs to the metallophosphoesterase superfamily. Requires a divalent metal cation as cofactor.

This is an uncharacterized protein from Helicobacter pylori (strain ATCC 700392 / 26695) (Campylobacter pylori).